The following is a 296-amino-acid chain: Ribonuclease HIII (296 aa).

The 217-residue stretch at 80-296 (LALIGSDEVG…NTKKAYQRLK (217 aa)) folds into the RNase H type-2 domain. 3 residues coordinate a divalent metal cation: Asp86, Glu87, and Asp191.

This sequence belongs to the RNase HII family. RnhC subfamily. It depends on Mn(2+) as a cofactor. Mg(2+) serves as cofactor.

The protein localises to the cytoplasm. The catalysed reaction is Endonucleolytic cleavage to 5'-phosphomonoester.. Endonuclease that specifically degrades the RNA of RNA-DNA hybrids. This chain is Ribonuclease HIII, found in Streptococcus thermophilus (strain ATCC BAA-491 / LMD-9).